The chain runs to 58 residues: Small ribosomal subunit protein bS21 (58 aa).

A disordered region spans residues 37-58; the sequence is FYEKPSVKRKRKSEAARKRKKF. Over residues 43–58 the composition is skewed to basic residues; it reads VKRKRKSEAARKRKKF.

This sequence belongs to the bacterial ribosomal protein bS21 family.

This Streptococcus sanguinis (strain SK36) protein is Small ribosomal subunit protein bS21.